A 364-amino-acid chain; its full sequence is tRNA/tmRNA (uracil-C(5))-methyltransferase (364 aa).

S-adenosyl-L-methionine contacts are provided by Q188, Y216, N221, E237, and D297. C322 serves as the catalytic Nucleophile. E356 serves as the catalytic Proton acceptor.

The protein belongs to the class I-like SAM-binding methyltransferase superfamily. RNA M5U methyltransferase family. TrmA subfamily.

It catalyses the reaction uridine(54) in tRNA + S-adenosyl-L-methionine = 5-methyluridine(54) in tRNA + S-adenosyl-L-homocysteine + H(+). It carries out the reaction uridine(341) in tmRNA + S-adenosyl-L-methionine = 5-methyluridine(341) in tmRNA + S-adenosyl-L-homocysteine + H(+). Functionally, dual-specificity methyltransferase that catalyzes the formation of 5-methyluridine at position 54 (m5U54) in all tRNAs, and that of position 341 (m5U341) in tmRNA (transfer-mRNA). This Mannheimia succiniciproducens (strain KCTC 0769BP / MBEL55E) protein is tRNA/tmRNA (uracil-C(5))-methyltransferase.